The sequence spans 83 residues: Bublin coiled-coil protein (83 aa).

The segment at 1–25 is disordered; that stretch reads MSGPNGDLGMPVDAGTEGENDSFGE. Residues 25–74 are a coiled coil; it reads EAEYAAINSMLDQINSCLDHLEEKNDHLHARLQELLESNRQTRLEFQQQL. Phosphoserine is present on Ser-82.

It belongs to the UPF0184 (EST00098) family.

It localises to the cell junction. Its subcellular location is the cytoplasm. It is found in the cytoskeleton. Its function is as follows. Essential for intermediate filament organization in intestinal cells, interacts with intermediate filament and regulates intestinal lumen morphology. In Mus musculus (Mouse), this protein is Bublin coiled-coil protein.